A 400-amino-acid polypeptide reads, in one-letter code: S-adenosylmethionine decarboxylase proenzyme (400 aa).

Catalysis depends on residues E18 and E21. Catalysis depends on S78, which acts as the Schiff-base intermediate with substrate; via pyruvic acid. S78 carries the post-translational modification Pyruvic acid (Ser); by autocatalysis. The active-site Proton donor; for catalytic activity is C92. Residues S243 and H256 each act as proton acceptor; for processing activity in the active site.

This sequence belongs to the eukaryotic AdoMetDC family. Pyruvate serves as cofactor. Is synthesized initially as an inactive proenzyme. Formation of the active enzyme involves a self-maturation process in which the active site pyruvoyl group is generated from an internal serine residue via an autocatalytic post-translational modification. Two non-identical subunits are generated from the proenzyme in this reaction, and the pyruvate is formed at the N-terminus of the alpha chain, which is derived from the carboxyl end of the proenzyme. The post-translation cleavage follows an unusual pathway, termed non-hydrolytic serinolysis, in which the side chain hydroxyl group of the serine supplies its oxygen atom to form the C-terminus of the beta chain, while the remainder of the serine residue undergoes an oxidative deamination to produce ammonia and the pyruvoyl group blocking the N-terminus of the alpha chain.

The enzyme catalyses S-adenosyl-L-methionine + H(+) = S-adenosyl 3-(methylsulfanyl)propylamine + CO2. The protein operates within amine and polyamine biosynthesis; S-adenosylmethioninamine biosynthesis; S-adenosylmethioninamine from S-adenosyl-L-methionine: step 1/1. This is S-adenosylmethionine decarboxylase proenzyme (SAMDC) from Zea mays (Maize).